Reading from the N-terminus, the 105-residue chain is Cell division topological specificity factor (105 aa).

Belongs to the MinE family.

Functionally, prevents the cell division inhibition by proteins MinC and MinD at internal division sites while permitting inhibition at polar sites. This ensures cell division at the proper site by restricting the formation of a division septum at the midpoint of the long axis of the cell. The sequence is that of Cell division topological specificity factor from Prochlorococcus marinus (strain MIT 9515).